The primary structure comprises 128 residues: Small ribosomal subunit protein uS11 (128 aa).

It belongs to the universal ribosomal protein uS11 family. As to quaternary structure, part of the 30S ribosomal subunit. Interacts with proteins S7 and S18. Binds to IF-3.

Functionally, located on the platform of the 30S subunit, it bridges several disparate RNA helices of the 16S rRNA. Forms part of the Shine-Dalgarno cleft in the 70S ribosome. This is Small ribosomal subunit protein uS11 from Wolbachia sp. subsp. Drosophila simulans (strain wRi).